The primary structure comprises 960 residues: Chromo domain-containing protein 1 (960 aa).

Positions 22-74 constitute a Chromo domain; the sequence is YEVEDILADRVNKNGINEYYIKWAGYDWYDNTWEPEQNLFGAEKVLKKWKKRK.

As to quaternary structure, ago1, chp1 and tas3 interact to form the core of the RNA-induced transcriptional silencing (RITS) complex. The RITS complex interacts with the RDRC complex via interaction between ago1 and hrr1. Clr4 has a role in mediating this interaction. Interacts with dri1.

Its subcellular location is the nucleus. The protein localises to the cytoplasm. The protein resides in the cytoskeleton. It is found in the microtubule organizing center. It localises to the spindle pole body. In terms of biological role, component of the kinetochore which plays a role in stabilizing microtubules and so allowing accurate chromosome segregation. Has a role in the RNA interference (RNAi) pathway which is important for heterochromatin formation and accurate chromosome segregation. A member of the RNA-induced transcriptional silencing (RITS) complex which is involved in the biosynthesis of dsRNA from primer siRNAs provided by the RNA-directed RNA polymerase (RDRC) complex. In Schizosaccharomyces pombe (strain 972 / ATCC 24843) (Fission yeast), this protein is Chromo domain-containing protein 1.